Reading from the N-terminus, the 235-residue chain is 5'-methylthioadenosine/S-adenosylhomocysteine nucleosidase (235 aa).

Residue Glu12 is the Proton acceptor of the active site. Residues Gly78, Met153, and 174-175 each bind substrate; that span reads ME. Asp198 functions as the Proton donor in the catalytic mechanism.

This sequence belongs to the PNP/UDP phosphorylase family. MtnN subfamily.

It carries out the reaction S-adenosyl-L-homocysteine + H2O = S-(5-deoxy-D-ribos-5-yl)-L-homocysteine + adenine. The enzyme catalyses S-methyl-5'-thioadenosine + H2O = 5-(methylsulfanyl)-D-ribose + adenine. It catalyses the reaction 5'-deoxyadenosine + H2O = 5-deoxy-D-ribose + adenine. Its pathway is amino-acid biosynthesis; L-methionine biosynthesis via salvage pathway; S-methyl-5-thio-alpha-D-ribose 1-phosphate from S-methyl-5'-thioadenosine (hydrolase route): step 1/2. Its function is as follows. Catalyzes the irreversible cleavage of the glycosidic bond in both 5'-methylthioadenosine (MTA) and S-adenosylhomocysteine (SAH/AdoHcy) to adenine and the corresponding thioribose, 5'-methylthioribose and S-ribosylhomocysteine, respectively. Also cleaves 5'-deoxyadenosine, a toxic by-product of radical S-adenosylmethionine (SAM) enzymes, into 5-deoxyribose and adenine. This is 5'-methylthioadenosine/S-adenosylhomocysteine nucleosidase from Pseudoalteromonas translucida (strain TAC 125).